The following is an 879-amino-acid chain: MALIDLEDKIAEIVNREDHSDFLYELLGVYDVPRATITRLKKGNQNLTKRVGEVHLKNKVWFKEAKKGKLFDALIDIEQQVEYLSAKPRYLLVTDYDGVLAKDTKTLEALDVKFEELPQYFDFFLAWKGIEKVEFEKENPADIKAAERFARIYDVLRKENNIIETNRGLDLFLIRLLFCFFAEDTDIFKRNSFTNLIKTLTEEDGSNLNKLFADLFIVLDKNERDDVPSYLKEFPYVNGQLFTEPHTELEFSAKSRKLIIECGELLNWAKINPDIFGSMIQAVASEESRSYLGMHYTSVPNIMKVIKPLFLDKLNQSFLDAYDDYTKLENLLTRIGKIKFFDPACGSGNFLIITYKELRRMEINIIKRLQELLGEYLYVPSVTLSQFYGIEIEDFAHDVAKLSLWIAEHQMNEELKNEVHNAVRPTLPLHTAGDIRCANAIRVEWTEVCPAQGSEEVYVFGNPPYLGSKKQNKEHKSDMLSIFGKVKNGKMLDYISAWFYFGAKYASTTNAKVAFVSTNSVTQGEQVSILWNELFKFGIQINFAYKSFKWANNAKNNAAVIVVIVGFGPLDTKVNKYLFVDETKKLVSNISPYLTDGENILVSSRTKPISDLPKLHFGNMPNDGGGLLFTITEYTDAINKYPELVPYFKKFIGSVEFINGGLRYCLWLNEAKYEKIKSNPLIQERISISKNHREKSTDKGTNKLALTPWKFRDTHETTNYSIVVPSVSSENRFYIPMGLAGADTILSNLIYVIYDAEIYLLGILMSRMHMTWVKAVAGRLKTDYRYSAGLCYNTFPIPELSTRRKNEIEEAILEILDLREEQGGTLAELYNPSTMPIELKVAHEKLDGIVERAYRQKQFESDEERLEVLLKLYQEMTER.

The protein belongs to the methyltransferase superfamily.

It catalyses the reaction a 2'-deoxyadenosine in DNA + S-adenosyl-L-methionine = an N(6)-methyl-2'-deoxyadenosine in DNA + S-adenosyl-L-homocysteine + H(+). Its function is as follows. Recognizes the double-stranded sequence 5'-GACGAG-3' and methylates A-5, yielding m6A. m6A methylation functions as a transcriptional modifier, promoting transcription of a number of genes (at least scpA, hbs, rnhC, yumC and zapA). One studied mechanism is via transcriptional repressor ScoC (also called hpr) which binds to non-methylated scpA promoter; when the m6A target is methylated ScoC no longer binds and scpA transcription is up-regulated. Other mechanisms for gene expression regulation probably exist. Binds DNA with and without the target sequence. Although it resembles a restriction-modification system, it does not have detectable endonuclease activity under tested conditions. A gamma subtype methylase. The sequence is that of DNA methyltransferase A from Bacillus subtilis (strain 168).